The primary structure comprises 488 residues: Ribulose bisphosphate carboxylase large chain (488 aa).

Residues N127 and T177 each coordinate substrate. Residue K179 is the Proton acceptor of the active site. Residue K181 coordinates substrate. Positions 205, 207, and 208 each coordinate Mg(2+). K205 carries the post-translational modification N6-carboxylysine. H297 acts as the Proton acceptor in catalysis. Substrate contacts are provided by R298, H330, and S382.

This sequence belongs to the RuBisCO large chain family. Type I subfamily. As to quaternary structure, heterohexadecamer of 8 large chains and 8 small chains. Mg(2+) serves as cofactor.

It is found in the plastid. Its subcellular location is the chloroplast. It catalyses the reaction 2 (2R)-3-phosphoglycerate + 2 H(+) = D-ribulose 1,5-bisphosphate + CO2 + H2O. The catalysed reaction is D-ribulose 1,5-bisphosphate + O2 = 2-phosphoglycolate + (2R)-3-phosphoglycerate + 2 H(+). RuBisCO catalyzes two reactions: the carboxylation of D-ribulose 1,5-bisphosphate, the primary event in carbon dioxide fixation, as well as the oxidative fragmentation of the pentose substrate in the photorespiration process. Both reactions occur simultaneously and in competition at the same active site. This Porphyra purpurea (Red seaweed) protein is Ribulose bisphosphate carboxylase large chain.